Reading from the N-terminus, the 696-residue chain is UvrABC system protein C (696 aa).

The region spanning 16-95 (TEPGVYKFRD…IKRFDPRFNV (80 aa)) is the GIY-YIG domain. Positions 208 to 243 (DKVTRKLNADMMAAAEELDFERAARLRDDLEAIDKV) constitute a UVR domain.

It belongs to the UvrC family. Interacts with UvrB in an incision complex.

It localises to the cytoplasm. The UvrABC repair system catalyzes the recognition and processing of DNA lesions. UvrC both incises the 5' and 3' sides of the lesion. The N-terminal half is responsible for the 3' incision and the C-terminal half is responsible for the 5' incision. This is UvrABC system protein C from Corynebacterium glutamicum (strain R).